A 143-amino-acid chain; its full sequence is Transcriptional regulator MraZ (143 aa).

2 SpoVT-AbrB domains span residues glutamate 5–glutamate 47 and alanine 76–arginine 119.

This sequence belongs to the MraZ family. In terms of assembly, forms oligomers.

It is found in the cytoplasm. The protein resides in the nucleoid. The chain is Transcriptional regulator MraZ from Lactobacillus johnsonii (strain CNCM I-12250 / La1 / NCC 533).